We begin with the raw amino-acid sequence, 153 residues long: Membrane-spanning 4-domains subfamily A member 13 (153 aa).

A run of 4 helical transmembrane segments spans residues 1-21 (MTGI…MGQI), 36-56 (GCSL…RATW), 71-91 (ILCM…LSTF), and 111-131 (VLLS…IFGC).

This sequence belongs to the MS4A family.

The protein resides in the membrane. In terms of biological role, may be involved in signal transduction as a component of a multimeric receptor complex. In Bos taurus (Bovine), this protein is Membrane-spanning 4-domains subfamily A member 13 (MS4A13).